Here is a 95-residue protein sequence, read N- to C-terminus: IgNAR transmembrane form NE (95 aa).

In terms of domain architecture, Ig-like spans 1–36 (LTFSTRSLLNLPAVEWKSGAKYTCTASHSPSQSTVK). Residues 24-35 (CTASHSPSQSTV) show a composition bias toward polar residues. The disordered stretch occupies residues 24–79 (CTASHSPSQSTVKRVIRNPKESPKGSSETRKSPLEIMESPEDYGTEEDQLENVNED). Residues 41 to 56 (NPKESPKGSSETRKSP) show a composition bias toward basic and acidic residues. Over residues 61-77 (ESPEDYGTEEDQLENVN) the composition is skewed to acidic residues. A glycan (N-linked (GlcNAc...) asparagine) is linked at Asn-81.

As to expression, expressed mainly in lymphoid tissues including spleen, epigonal organ and circulating lymphocytes. Also expressed at low levels in the pancreas.

In Ginglymostoma cirratum (Nurse shark), this protein is IgNAR transmembrane form NE.